The primary structure comprises 599 residues: Putative sensor histidine kinase NtrY-like (599 aa).

The next 4 helical transmembrane spans lie at 17-37, 44-64, 85-105, and 285-305; these read VLIF…FYVI, FSTI…LGVL, IVIA…VFSV, and IMFI…GVIF. The region spanning 307–361 is the HAMP domain; the sequence is AKIVKPIKKLVTATDKVKDGDLTVQVPENEVDKDEIGTLYAAFNRMIKQLSRQQR. Residues 378–589 form the Histidine kinase domain; that stretch reads KVAHEIKNPL…IIDIKFDLKK (212 aa). At His381 the chain carries Phosphohistidine; by autocatalysis.

Its subcellular location is the cell membrane. It carries out the reaction ATP + protein L-histidine = ADP + protein N-phospho-L-histidine.. Its function is as follows. Member of the two-component regulatory system RF_0427/RF_0895. The sequence is that of Putative sensor histidine kinase NtrY-like from Rickettsia felis (strain ATCC VR-1525 / URRWXCal2) (Rickettsia azadi).